We begin with the raw amino-acid sequence, 542 residues long: Chaperonin GroEL 2 (542 aa).

ATP is bound by residues 30 to 33, Lys-51, 87 to 91, Gly-415, and Asp-496; these read TLGP and DGTTT.

This sequence belongs to the chaperonin (HSP60) family. As to quaternary structure, forms a cylinder of 14 subunits composed of two heptameric rings stacked back-to-back. Interacts with the co-chaperonin GroES.

The protein localises to the cytoplasm. It catalyses the reaction ATP + H2O + a folded polypeptide = ADP + phosphate + an unfolded polypeptide.. Its function is as follows. Together with its co-chaperonin GroES, plays an essential role in assisting protein folding. The GroEL-GroES system forms a nano-cage that allows encapsulation of the non-native substrate proteins and provides a physical environment optimized to promote and accelerate protein folding. The polypeptide is Chaperonin GroEL 2 (Chelativorans sp. (strain BNC1)).